Reading from the N-terminus, the 293-residue chain is Elongation factor Ts (293 aa).

Residues 80–83 (TDFV) form an involved in Mg(2+) ion dislocation from EF-Tu region.

The protein belongs to the EF-Ts family.

Its subcellular location is the cytoplasm. In terms of biological role, associates with the EF-Tu.GDP complex and induces the exchange of GDP to GTP. It remains bound to the aminoacyl-tRNA.EF-Tu.GTP complex up to the GTP hydrolysis stage on the ribosome. The sequence is that of Elongation factor Ts from Burkholderia lata (strain ATCC 17760 / DSM 23089 / LMG 22485 / NCIMB 9086 / R18194 / 383).